The primary structure comprises 165 residues: AP-3 complex subunit sigma (165 aa).

The protein belongs to the adaptor complexes small subunit family. In terms of assembly, adaptor protein complex 3 (AP-3) is a heterotetramer composed of 2 large adaptins (apl5 and apl6), a medium adaptin (apm3) and a small adaptin (aps3).

The protein localises to the golgi apparatus. The protein resides in the cytoplasmic vesicle membrane. Its function is as follows. Part of the AP-3 complex, an adaptor-related complex which is not clathrin-associated. The complex is associated with the Golgi region as well as more peripheral structures. It facilitates the budding of vesicles from the Golgi membrane and may be directly involved in trafficking to the vacuole. This is AP-3 complex subunit sigma (aps3) from Schizosaccharomyces pombe (strain 972 / ATCC 24843) (Fission yeast).